Consider the following 457-residue polypeptide: Protein trichome birefringence-like 4 (457 aa).

The helical; Signal-anchor for type II membrane protein transmembrane segment at 19–37 (IFLTSLFFLSLFLLSSSSL) threads the bilayer. The short motif at 173-175 (GDS) is the GDS motif element. Residues 420–434 (DCSHWCLPGVPDSWN) carry the DCXHWCLPGXXDXWN motif motif.

The protein belongs to the PC-esterase family. TBL subfamily.

It localises to the membrane. Functionally, may act as a bridging protein that binds pectin and other cell wall polysaccharides. Probably involved in maintaining esterification of pectins. May be involved in the specific O-acetylation of cell wall polymers. This is Protein trichome birefringence-like 4 (TBL4) from Arabidopsis thaliana (Mouse-ear cress).